Consider the following 335-residue polypeptide: N-acetyl-gamma-glutamyl-phosphate reductase (335 aa).

Cysteine 147 is a catalytic residue.

Belongs to the NAGSA dehydrogenase family. Type 1 subfamily.

Its subcellular location is the cytoplasm. It catalyses the reaction N-acetyl-L-glutamate 5-semialdehyde + phosphate + NADP(+) = N-acetyl-L-glutamyl 5-phosphate + NADPH + H(+). Its pathway is amino-acid biosynthesis; L-arginine biosynthesis; N(2)-acetyl-L-ornithine from L-glutamate: step 3/4. Functionally, catalyzes the NADPH-dependent reduction of N-acetyl-5-glutamyl phosphate to yield N-acetyl-L-glutamate 5-semialdehyde. The polypeptide is N-acetyl-gamma-glutamyl-phosphate reductase (Campylobacter hominis (strain ATCC BAA-381 / DSM 21671 / CCUG 45161 / LMG 19568 / NCTC 13146 / CH001A)).